Here is a 378-residue protein sequence, read N- to C-terminus: Rhodopsin (378 aa).

Residues 1-53 (MMSIASGPSHAAYTWTAQGGGFGNQTVVDKVPPEMLHLVDAHWYQFPPMNPLW) are Extracellular-facing. N24 carries N-linked (GlcNAc...) asparagine glycosylation. Residues 54 to 78 (HAILGFVIGILGMISVIGNGMVIYI) traverse the membrane as a helical segment. Residues 79–90 (FTTTKSLRTPSN) lie on the Cytoplasmic side of the membrane. Residues 91-115 (LLVINLAISDFLMMLSMSPAMVINC) form a helical membrane-spanning segment. The Extracellular portion of the chain corresponds to 116–130 (YYETWVLGPLVCELY). C127 and C204 are disulfide-bonded. Residues 131 to 150 (GLTGSLFGCGSIWTMTMIAF) form a helical membrane-spanning segment. Topologically, residues 151–169 (DRYNVIVKGLSAKPMTING) are cytoplasmic. Residues 170–193 (ALLRILGIWFFSLGWTIAPMFGWN) traverse the membrane as a helical segment. At 194–217 (RYVPEGNMTACGTDYLTKDLLSRS) the chain is on the extracellular side. N-linked (GlcNAc...) asparagine glycosylation is present at N200. A helical transmembrane segment spans residues 218 to 245 (YILVYSFFCYFLPLFLIIYSYFFIIQAV). The Cytoplasmic portion of the chain corresponds to 246–280 (AAHEKNMREQAKKMNVASLRSAENQSTSAECKLAK). A helical transmembrane segment spans residues 281–304 (VALMTISLWFMAWTPYLVINYAGI). At 305-311 (FETVKIN) the chain is on the extracellular side. The helical transmembrane segment at 312-336 (PLFTIWGSLFAKANAVYNPIVYGIS) threads the bilayer. The residue at position 323 (K323) is an N6-(retinylidene)lysine. The Cytoplasmic portion of the chain corresponds to 337 to 378 (HPKYRAALFQRFPSLACSSGPAGADTLSTTTTVTEGTEKPAA). A disordered region spans residues 356 to 378 (GPAGADTLSTTTTVTEGTEKPAA). The span at 362-371 (TLSTTTTVTE) shows a compositional bias: low complexity.

It belongs to the G-protein coupled receptor 1 family. Opsin subfamily. In terms of processing, phosphorylated on some or all of the serine and threonine residues present in the C-terminal region.

It is found in the membrane. In terms of biological role, visual pigments are the light-absorbing molecules that mediate vision. They consist of an apoprotein, opsin, covalently linked to cis-retinal. This is Rhodopsin from Cataglyphis bombycina (Saharan silver ant).